The chain runs to 141 residues: HTH-type transcriptional repressor NsrR (141 aa).

The HTH rrf2-type domain occupies 2 to 129; it reads QLTNFTDYGL…DNYTLADLVE (128 aa). Residues 28 to 51 constitute a DNA-binding region (H-T-H motif); it reads ISEVTDVYGVSRNHMVKIINQLSR. 3 residues coordinate [2Fe-2S] cluster: cysteine 91, cysteine 96, and cysteine 102.

The cofactor is [2Fe-2S] cluster.

Functionally, nitric oxide-sensitive repressor of genes involved in protecting the cell against nitrosative stress. May require iron for activity. This is HTH-type transcriptional repressor NsrR from Shigella boydii serotype 18 (strain CDC 3083-94 / BS512).